A 594-amino-acid chain; its full sequence is Elongation factor 4 (594 aa).

A tr-type G domain is found at 2–184 (KNIRNFSIIA…TIVAKVPAPE (183 aa)). GTP contacts are provided by residues 14–19 (DHGKST) and 131–134 (NKID).

Belongs to the TRAFAC class translation factor GTPase superfamily. Classic translation factor GTPase family. LepA subfamily.

It is found in the cell inner membrane. It catalyses the reaction GTP + H2O = GDP + phosphate + H(+). Functionally, required for accurate and efficient protein synthesis under certain stress conditions. May act as a fidelity factor of the translation reaction, by catalyzing a one-codon backward translocation of tRNAs on improperly translocated ribosomes. Back-translocation proceeds from a post-translocation (POST) complex to a pre-translocation (PRE) complex, thus giving elongation factor G a second chance to translocate the tRNAs correctly. Binds to ribosomes in a GTP-dependent manner. This is Elongation factor 4 from Francisella philomiragia subsp. philomiragia (strain ATCC 25017 / CCUG 19701 / FSC 153 / O#319-036).